We begin with the raw amino-acid sequence, 234 residues long: Endonuclease V (234 aa).

Mg(2+)-binding residues include D46 and D116.

Belongs to the endonuclease V family. Requires Mg(2+) as cofactor.

The protein localises to the cytoplasm. The catalysed reaction is Endonucleolytic cleavage at apurinic or apyrimidinic sites to products with a 5'-phosphate.. Its function is as follows. DNA repair enzyme involved in the repair of deaminated bases. Selectively cleaves double-stranded DNA at the second phosphodiester bond 3' to a deoxyinosine leaving behind the intact lesion on the nicked DNA. This chain is Endonuclease V, found in Clostridium acetobutylicum (strain ATCC 824 / DSM 792 / JCM 1419 / IAM 19013 / LMG 5710 / NBRC 13948 / NRRL B-527 / VKM B-1787 / 2291 / W).